We begin with the raw amino-acid sequence, 149 residues long: Snake venom vascular endothelial growth factor toxin 2 (149 aa).

Residues 1–24 (MAAYLLAVAILFCIQGWPSGTVQG) form the signal peptide. Position 25 is a pyrrolidone carboxylic acid (Gln25). 3 disulfides stabilise this stretch: Cys38-Cys80, Cys69-Cys115, and Cys73-Cys117. Residues 118-149 (RPRSGRVNSGKRKRNPEEGGAESQVPLGLTSF) are disordered.

This sequence belongs to the PDGF/VEGF growth factor family. Snake venom VEGF subfamily. As to quaternary structure, homodimer; disulfide-linked. Interacts with VEGF receptor-1 (FLT1) with a high affinity, whereas it binds to VEGF receptor-2 (KDR) with a low affinity. Does not bind VEGF receptor-3 (FLT4). In terms of tissue distribution, expressed by the venom gland.

It is found in the secreted. Functionally, snake venom VEGFs that may contribute to venom dispersion and prey subjugation by inducing vascular permeability and hypotension. This protein induces an increase in capillary permeability after intradermal injection, as well as a drastic hypotensive effect after intravenous injection. The hypotension is mediated by nitric oxide (NO), which is produced by VEGF-activated endothelium NO synthase. Also induces angiogenesis in vitro. Like other crotalid VEGFs, this protein interacts with VEGF receptor-1 (FLT1) with a high affinity, whereas it binds to VEGF receptor-2 (KDR) with a low affinity. The polypeptide is Snake venom vascular endothelial growth factor toxin 2 (Sistrurus catenatus edwardsii (Desert massasauga)).